Here is a 310-residue protein sequence, read N- to C-terminus: Aspartate carbamoyltransferase catalytic subunit (310 aa).

Positions 58 and 59 each coordinate carbamoyl phosphate. Residue Lys86 coordinates L-aspartate. Carbamoyl phosphate contacts are provided by Arg108, His137, and Gln140. Arg170 and Arg225 together coordinate L-aspartate. 2 residues coordinate carbamoyl phosphate: Gly264 and Pro265.

The protein belongs to the aspartate/ornithine carbamoyltransferase superfamily. ATCase family. Heterododecamer (2C3:3R2) of six catalytic PyrB chains organized as two trimers (C3), and six regulatory PyrI chains organized as three dimers (R2).

It carries out the reaction carbamoyl phosphate + L-aspartate = N-carbamoyl-L-aspartate + phosphate + H(+). The protein operates within pyrimidine metabolism; UMP biosynthesis via de novo pathway; (S)-dihydroorotate from bicarbonate: step 2/3. Functionally, catalyzes the condensation of carbamoyl phosphate and aspartate to form carbamoyl aspartate and inorganic phosphate, the committed step in the de novo pyrimidine nucleotide biosynthesis pathway. The chain is Aspartate carbamoyltransferase catalytic subunit from Coxiella burnetii (strain CbuK_Q154) (Coxiella burnetii (strain Q154)).